A 147-amino-acid polypeptide reads, in one-letter code: D-aminoacyl-tRNA deacylase (147 aa).

Positions 136-137 (GP) match the Gly-cisPro motif, important for rejection of L-amino acids motif.

Belongs to the DTD family. As to quaternary structure, homodimer.

The protein resides in the cytoplasm. It catalyses the reaction glycyl-tRNA(Ala) + H2O = tRNA(Ala) + glycine + H(+). It carries out the reaction a D-aminoacyl-tRNA + H2O = a tRNA + a D-alpha-amino acid + H(+). An aminoacyl-tRNA editing enzyme that deacylates mischarged D-aminoacyl-tRNAs. Also deacylates mischarged glycyl-tRNA(Ala), protecting cells against glycine mischarging by AlaRS. Acts via tRNA-based rather than protein-based catalysis; rejects L-amino acids rather than detecting D-amino acids in the active site. By recycling D-aminoacyl-tRNA to D-amino acids and free tRNA molecules, this enzyme counteracts the toxicity associated with the formation of D-aminoacyl-tRNA entities in vivo and helps enforce protein L-homochirality. The sequence is that of D-aminoacyl-tRNA deacylase from Streptococcus pneumoniae (strain P1031).